We begin with the raw amino-acid sequence, 808 residues long: Quinoprotein glucose dehydrogenase (808 aa).

An N-terminal signal peptide occupies residues 1–33; sequence MSTTSRPGLWALITAAVFALCGAILTVGGAWVA. Helical transmembrane passes span 35 to 54, 59 to 76, 94 to 108, and 123 to 138; these read IGGP…TAFL, NPAA…TVIW, IVII…PFVS, and GAVG…SLFT. Residue D470 is the Proton acceptor of the active site. The disordered stretch occupies residues 514–545; it reads VPAPETPVPQGAAPGDHTSPTQPMSQLTLRPK. Residues 531–541 are compositionally biased toward polar residues; that stretch reads TSPTQPMSQLT.

The protein belongs to the bacterial PQQ dehydrogenase family. Pyrroloquinoline quinone is required as a cofactor.

The protein localises to the cell inner membrane. The enzyme catalyses a ubiquinone + D-glucose = D-glucono-1,5-lactone + a ubiquinol. In Gluconobacter oxydans (strain 621H) (Gluconobacter suboxydans), this protein is Quinoprotein glucose dehydrogenase (gdh).